The primary structure comprises 398 residues: Succinate--CoA ligase [ADP-forming] subunit beta (398 aa).

Positions 9–253 (KELLKSYGVA…EAEEDPKELE (245 aa)) constitute an ATP-grasp domain. Residues Lys-46, 53–55 (GRG), Glu-108, Cys-111, and Glu-116 contribute to the ATP site. Positions 208 and 222 each coordinate Mg(2+). Substrate contacts are provided by residues Asn-273 and 330–332 (GIM).

Belongs to the succinate/malate CoA ligase beta subunit family. In terms of assembly, heterotetramer of two alpha and two beta subunits. It depends on Mg(2+) as a cofactor.

It catalyses the reaction succinate + ATP + CoA = succinyl-CoA + ADP + phosphate. The enzyme catalyses GTP + succinate + CoA = succinyl-CoA + GDP + phosphate. Its pathway is carbohydrate metabolism; tricarboxylic acid cycle; succinate from succinyl-CoA (ligase route): step 1/1. Functionally, succinyl-CoA synthetase functions in the citric acid cycle (TCA), coupling the hydrolysis of succinyl-CoA to the synthesis of either ATP or GTP and thus represents the only step of substrate-level phosphorylation in the TCA. The beta subunit provides nucleotide specificity of the enzyme and binds the substrate succinate, while the binding sites for coenzyme A and phosphate are found in the alpha subunit. The sequence is that of Succinate--CoA ligase [ADP-forming] subunit beta from Acidiphilium cryptum (strain JF-5).